The primary structure comprises 134 residues: L-ectoine synthase (134 aa).

The protein belongs to the ectoine synthase family.

The catalysed reaction is (2S)-4-acetamido-2-aminobutanoate = L-ectoine + H2O. The protein operates within amine and polyamine biosynthesis; ectoine biosynthesis; L-ectoine from L-aspartate 4-semialdehyde: step 3/3. Catalyzes the circularization of gamma-N-acetyl-alpha,gamma-diaminobutyric acid (ADABA) to ectoine (1,4,5,6-tetrahydro-2-methyl-4-pyrimidine carboxylic acid), which is an excellent osmoprotectant. The polypeptide is L-ectoine synthase (Thermobifida fusca (strain YX)).